The chain runs to 812 residues: Eukaryotic translation initiation factor 3 subunit C (812 aa).

The interval Met-1–Lys-105 is disordered. Composition is skewed to acidic residues over residues Ser-17 to Ser-40 and Ser-48 to Ser-59. Positions Phe-607–Glu-783 constitute a PCI domain.

Belongs to the eIF-3 subunit C family. Component of the eukaryotic translation initiation factor 3 (eIF-3) complex.

The protein localises to the cytoplasm. Its function is as follows. Component of the eukaryotic translation initiation factor 3 (eIF-3) complex, which is involved in protein synthesis of a specialized repertoire of mRNAs and, together with other initiation factors, stimulates binding of mRNA and methionyl-tRNAi to the 40S ribosome. The eIF-3 complex specifically targets and initiates translation of a subset of mRNAs involved in cell proliferation. In Eremothecium gossypii (strain ATCC 10895 / CBS 109.51 / FGSC 9923 / NRRL Y-1056) (Yeast), this protein is Eukaryotic translation initiation factor 3 subunit C.